Here is a 27-residue protein sequence, read N- to C-terminus: Natriuretic peptides A (27 aa).

A disulfide bridge connects residues Cys-7 and Cys-23.

This sequence belongs to the natriuretic peptide family.

Its subcellular location is the secreted. Hormone playing a key role in cardiovascular homeostasis through regulation of natriuresis, diuresis, and vasodilation. Has a cGMP-stimulating activity. The protein is Natriuretic peptides A (nppa) of Anguilla japonica (Japanese eel).